A 657-amino-acid chain; its full sequence is Zinc transporter ZIP4 (657 aa).

A signal peptide spans Met-1–Met-22. Residues Val-23–Tyr-335 are Extracellular-facing. 3 N-linked (GlcNAc...) asparagine glycosylation sites follow: Asn-193, Asn-220, and Asn-268. A helical membrane pass occupies residues Leu-336–Leu-356. Topologically, residues Thr-357–Ser-374 are cytoplasmic. Residues Leu-375–Leu-395 form a helical membrane-spanning segment. Over His-396–Arg-417 the chain is Extracellular. The helical transmembrane segment at Leu-418–Leu-438 threads the bilayer. Over Leu-439–Tyr-508 the chain is Cytoplasmic. The short motif at Leu-462–Leu-464 is the Essential for SLC39A4 endocytosis element. The disordered stretch occupies residues Ser-467–Leu-491. The helical transmembrane segment at Leu-509–Ala-528 threads the bilayer. Residues His-517, Asn-518, and Asp-521 each contribute to the Zn(2+) site. Residues Phe-529–Gly-536 lie on the Extracellular side of the membrane. The helical transmembrane segment at Leu-537 to Leu-563 threads the bilayer. The Zn(2+) site is built by His-546, Glu-547, and His-550. Residues Thr-564–Ala-568 lie on the Cytoplasmic side of the membrane. Residues Leu-569–Val-589 form a helical membrane-spanning segment. Residues Gly-590–Thr-597 lie on the Extracellular side of the membrane. Residues Trp-598–Ala-618 form a helical membrane-spanning segment. Topologically, residues Met-619–Pro-627 are cytoplasmic. Residues Trp-628 to Leu-648 form a helical membrane-spanning segment. At Ser-649 to Phe-657 the chain is on the extracellular side.

This sequence belongs to the ZIP transporter (TC 2.A.5) family. As to quaternary structure, homodimer; homodimerization is mediated by the transmembrane domain. In terms of processing, the extracellular N-terminal ectodomain is cleaved when cells are Zn(2+) deficient, N-terminally cleaved SLC39A4 is internalized at a faster rate. Under excess Zn(2+) conditions, SLC39A4 on the cell surface is rapidly endocytosed, ubiquitinated and degraded. Post-translationally, glycosylated. As to expression, expressed in duodenum, jejunum, and ileum.

The protein localises to the cell membrane. Its subcellular location is the recycling endosome membrane. The protein resides in the apical cell membrane. The catalysed reaction is Zn(2+)(in) = Zn(2+)(out). Functionally, selective transporter that mediates the uptake of Zn(2+). Plays an essential role for dietary zinc uptake from small intestine. The Zn(2+) uniporter activity is regulated by zinc availability. Also exhibits polyspecific binding and transport of Cu(2+), Cd(2+) and possibly Ni(2+) but at higher concentrations. The chain is Zinc transporter ZIP4 (Slc39a4) from Rattus norvegicus (Rat).